The following is a 328-amino-acid chain: POU domain, class 5, transcription factor 2 (328 aa).

Positions 1-25 (MAGHRPSNHFCPLPGSGGGGPRGPM) are disordered. In terms of domain architecture, POU-specific spans 118-192 (DISGILKELQ…LLKKWLKEVE (75 aa)). The homeobox DNA-binding region spans 210–269 (GKWRRASRERRIGNSLEKFFQRCPKPTPQQISHIAGCLQLQKDVVRVWFYNRSKMGSRPT).

It belongs to the POU transcription factor family. Class-5 subfamily. As to expression, expressed in skeletal and cardiac muscles, brain, heart and lung. Little or no detectable expression found in pancreas, kidney, liver or placenta.

The protein resides in the nucleus. Its function is as follows. Transcription factor that binds preferentially to the octamer motif (5'-ATGTTAAT-3'). May exert a regulatory function in meiotic events that are required for terminal differentiation of male germ cell. In Homo sapiens (Human), this protein is POU domain, class 5, transcription factor 2 (POU5F2).